We begin with the raw amino-acid sequence, 307 residues long: Aspartate carbamoyltransferase catalytic subunit (307 aa).

Carbamoyl phosphate contacts are provided by Arg-59 and Thr-60. L-aspartate is bound at residue Lys-87. Residues Arg-109, His-137, and Gln-140 each contribute to the carbamoyl phosphate site. Arg-173 and Arg-223 together coordinate L-aspartate. Residues Gly-266 and Pro-267 each coordinate carbamoyl phosphate.

This sequence belongs to the aspartate/ornithine carbamoyltransferase superfamily. ATCase family. Heterododecamer (2C3:3R2) of six catalytic PyrB chains organized as two trimers (C3), and six regulatory PyrI chains organized as three dimers (R2).

It catalyses the reaction carbamoyl phosphate + L-aspartate = N-carbamoyl-L-aspartate + phosphate + H(+). Its pathway is pyrimidine metabolism; UMP biosynthesis via de novo pathway; (S)-dihydroorotate from bicarbonate: step 2/3. Functionally, catalyzes the condensation of carbamoyl phosphate and aspartate to form carbamoyl aspartate and inorganic phosphate, the committed step in the de novo pyrimidine nucleotide biosynthesis pathway. The polypeptide is Aspartate carbamoyltransferase catalytic subunit (Helicobacter pylori (strain ATCC 700392 / 26695) (Campylobacter pylori)).